The following is a 464-amino-acid chain: Protein ABHD18 (464 aa).

A signal peptide spans 1-24 (MGVSKLDILYRRLLLTKLFIRGWG). Residue N341 is glycosylated (N-linked (GlcNAc...) asparagine).

Belongs to the AB hydrolase superfamily.

Its subcellular location is the secreted. This Mus musculus (Mouse) protein is Protein ABHD18.